The chain runs to 142 residues: MAKEFSRTRRIAQQLQQELAVVLQRDMKDPRIGFVTVNDVDVSRDLSYAKVFVTFFEEDEKLVQEKVEALDAAAGYIRSLVAGRMKLRVMPELRFIYDSSLVEGMRMSNLVSRVISDDEAKQQEHGTVENAKQDGDKAEDDK.

Residues 118 to 142 (DEAKQQEHGTVENAKQDGDKAEDDK) are disordered.

This sequence belongs to the RbfA family. In terms of assembly, monomer. Binds 30S ribosomal subunits, but not 50S ribosomal subunits or 70S ribosomes.

Its subcellular location is the cytoplasm. Functionally, one of several proteins that assist in the late maturation steps of the functional core of the 30S ribosomal subunit. Associates with free 30S ribosomal subunits (but not with 30S subunits that are part of 70S ribosomes or polysomes). Required for efficient processing of 16S rRNA. May interact with the 5'-terminal helix region of 16S rRNA. This chain is Ribosome-binding factor A, found in Shewanella piezotolerans (strain WP3 / JCM 13877).